Here is a 289-residue protein sequence, read N- to C-terminus: MAGAKEIRSKIGSVQNTQKITKAMEMVAASKMRKSQERMAASRPYAETMRKVIGHIALGNLEYKHPYLDERDVKRVGYLVVSTDRGLCGGLNINLFKRVLADMKAWADKGVESDLAIIGSKGLSFFSSVGGNVVAQASGMGDKPALSDLIGPVKVMLQAYDEGRIDKLYIVSNKFINTMSQSPQIVQLLPLPPADDAEGVVKKSTWDYLYEPDPKALLDTLLRRYVESQVYQGVVENLASEQAARMVAMKAATDNGGNLIKELQLVYNKARQASITQELTEIVSGASAV.

It belongs to the ATPase gamma chain family. As to quaternary structure, F-type ATPases have 2 components, CF(1) - the catalytic core - and CF(0) - the membrane proton channel. CF(1) has five subunits: alpha(3), beta(3), gamma(1), delta(1), epsilon(1). CF(0) has three main subunits: a, b and c.

It localises to the cell inner membrane. Functionally, produces ATP from ADP in the presence of a proton gradient across the membrane. The gamma chain is believed to be important in regulating ATPase activity and the flow of protons through the CF(0) complex. The sequence is that of ATP synthase gamma chain from Erwinia tasmaniensis (strain DSM 17950 / CFBP 7177 / CIP 109463 / NCPPB 4357 / Et1/99).